Here is a 526-residue protein sequence, read N- to C-terminus: Putative UDP-glucuronosyltransferase ugt-48 (526 aa).

Residues 1-17 (MLLRILTFLAVCQVTTS) form the signal peptide. N-linked (GlcNAc...) asparagine glycans are attached at residues Asn-58 and Asn-305. Residues 489–509 (FYNLDIIITAASIPVLIFIVL) form a helical membrane-spanning segment. An N-linked (GlcNAc...) asparagine glycan is attached at Asn-513.

Belongs to the UDP-glycosyltransferase family. As to quaternary structure, interacts with cmd-1 in the presence of Ca(2+).

It localises to the membrane. The enzyme catalyses glucuronate acceptor + UDP-alpha-D-glucuronate = acceptor beta-D-glucuronoside + UDP + H(+). This Caenorhabditis elegans protein is Putative UDP-glucuronosyltransferase ugt-48 (ugt-48).